The sequence spans 549 residues: Frizzled/smoothened-like sans CRD protein A (549 aa).

Residues 1–22 (MKFNFKLILIILIINQILIINC) form the signal peptide. The Extracellular portion of the chain corresponds to 23–89 (KENKILEIYK…EVNTLSLMIK (67 aa)). Asn63 is a glycosylation site (N-linked (GlcNAc...) asparagine). A helical membrane pass occupies residues 90–110 (ITGTISFIASLILLLIYSPLI). The Cytoplasmic segment spans residues 111-119 (NRMGYNRHT). A helical transmembrane segment spans residues 120-140 (IGIFFLTFSVFLIMLTDIIYV). Topologically, residues 141–162 (HHGNDLICPQSHRYSRQNDSGC) are extracellular. Asn158 carries N-linked (GlcNAc...) asparagine glycosylation. The chain crosses the membrane as a helical span at residues 163-183 (TITGILFQYGCIAAVLFWATL). The Cytoplasmic portion of the chain corresponds to 184–198 (SLDLYLTLKKISTKK). A helical membrane pass occupies residues 199–219 (VEKWYLIILTLIALILTFVPL). Residues 220–241 (VKKSYGYLVTGLACWILDSTDQ) lie on the Extracellular side of the membrane. Residues 242 to 262 (IIFFWAPFTAILGIGSILIVL) form a helical membrane-spanning segment. Residues 263–287 (VVYEIYKISKITKQNRGIFQSHIRP) lie on the Cytoplasmic side of the membrane. Residues 288–308 (LLMVLFIFGQFLFILAFNALI) form a helical membrane-spanning segment. The Extracellular segment spans residues 309-346 (NNKYDEYSARMDSYIDCLFSSSSYSYLCRLKTFPFEME). Residues 347 to 367 (FIVLFFLRLIGIEVLIFYGFT) form a helical membrane-spanning segment. The Cytoplasmic segment spans residues 368 to 549 (QQTKKILLHS…NNNSNNDENN (182 aa)). Low complexity-rich tracts occupy residues 417-474 (NNNN…SQQN) and 536-549 (NKNI…DENN). Disordered regions lie at residues 417-483 (NNNN…QKLS) and 528-549 (QYEE…DENN). Positions 432–475 (NNLNNNLNNNNLNNNNNLNNLNNLNINNNLKNSQNNLNNSQQNE) form a coiled coil.

Belongs to the G-protein coupled receptor Fz/Smo family.

Its subcellular location is the membrane. In Dictyostelium discoideum (Social amoeba), this protein is Frizzled/smoothened-like sans CRD protein A (fscA).